We begin with the raw amino-acid sequence, 398 residues long: Na(+)/H(+) antiporter NhaA (398 aa).

12 consecutive transmembrane segments (helical) span residues 21–41 (AGGI…NSPL), 56–76 (LSVS…LVGL), 94–114 (VLPG…YVFI), 124–144 (GWAI…SLLG), 153–173 (VFLT…IAIF), 176–196 (SGLS…LVVL), 201–221 (VMTL…VLKS), 263–283 (IVPF…SLAG), 284–304 (LSLG…LVVG), 306–326 (LVGV…DLPA), 333–353 (MIGI…IGLL), and 367–387 (VGIL…LLMA).

It belongs to the NhaA Na(+)/H(+) (TC 2.A.33) antiporter family.

It localises to the cell inner membrane. The catalysed reaction is Na(+)(in) + 2 H(+)(out) = Na(+)(out) + 2 H(+)(in). Functionally, na(+)/H(+) antiporter that extrudes sodium in exchange for external protons. The protein is Na(+)/H(+) antiporter NhaA of Mesorhizobium japonicum (strain LMG 29417 / CECT 9101 / MAFF 303099) (Mesorhizobium loti (strain MAFF 303099)).